The primary structure comprises 786 residues: Cyclin-F (786 aa).

The Nuclear localization signal 1 motif lies at 20–28; sequence KRRIRRRPR. Positions 29–76 constitute an F-box domain; sequence NLTILSLPEDVLFHILKWLSVEDILAVRAVHSQLKDLVDNHASVWACA. Residues 288-405 enclose the Cyclin N-terminal domain; sequence QASQAVSKQQ…EIVSALEGKI (118 aa). Short sequence motifs (d box) lie at residues 310 to 313, 343 to 346, 349 to 352, and 351 to 354; these read RYIL, RRRL, RYRL, and RLQL. Disordered stretches follow at residues 564–593 and 675–738; these read SPSGRRTKRKRENSLQEDRGSFVTTPTAEL and TQIP…HTQP. Residues 568-574 carry the Nuclear localization signal 2 motif; sequence RRTKRKR. The interval 582–766 is PEST; it reads RGSFVTTPTA…ESSVPQQQVK (185 aa). Residues 697-714 show a composition bias toward low complexity; that stretch reads VTTSGYSSVSTASPTSSV. Polar residues predominate over residues 723–738; sequence QPTSVLSLDSDSHTQP. The short motif at 767–770 is the D box 5 element; the sequence is RINL.

Belongs to the cyclin family. Cyclin AB subfamily. In terms of assembly, component of the SCF(CCNF) complex consisting of CUL1, RBX1, SKP1 and CCNF. Interacts with SKP1. Interacts with CUL1. Interacts with CCNB1; interaction is required for nuclear localization of CCNB1. Interacts with CCP110; this interaction leads to CCP110 ubiquitination and degradation via the proteasome pathway. Interacts (via the Cyclin N-terminal domain) with MYBL2/BMYB. Interacts with FZR1/CDH1 (via N-terminus). Interacts with RRM2 (via Cy motif and when phosphorylated at 'Thr-33'); the interaction occurs exclusively in G2 and early M. Interacts with CDC6 (via Cy motif); the interaction takes place during G2 and M phase. Degraded when the spindle assembly checkpoint is activated during the G2-M transition. Degradation depends on the C-terminal PEST sequence. Post-translationally, phosphorylated just before cells enter into mitosis. In terms of processing, ubiquitinated by the anaphase-promoting complex (APC/C); leading to its degradation by the proteasome. Widely expressed, with expression detected in the heart, brain, placenta, lung, liver, skeletal muscle, kidney and pancreas.

It localises to the nucleus. The protein resides in the cytoplasm. The protein localises to the perinuclear region. It is found in the cytoskeleton. Its subcellular location is the microtubule organizing center. It localises to the centrosome. The protein resides in the centriole. Functionally, substrate recognition component of a SCF (SKP1-CUL1-F-box protein) E3 ubiquitin-protein ligase complex which mediates the ubiquitination and subsequent proteasomal degradation of target proteins. The SCF(CCNF) E3 ubiquitin-protein ligase complex is an integral component of the ubiquitin proteasome system (UPS) and links proteasome degradation to the cell cycle. Mediates the substrate recognition and the proteasomal degradation of various target proteins involved in the regulation of cell cycle progression and in the maintenance of genome stability. Mediates the ubiquitination and proteasomal degradation of CP110 during G2 phase, thereby acting as an inhibitor of centrosome reduplication. In G2, mediates the ubiquitination and subsequent degradation of ribonucleotide reductase RRM2, thereby maintaining a balanced pool of dNTPs and genome integrity. In G2, mediates the ubiquitination and proteasomal degradation of CDC6, thereby suppressing DNA re-replication and preventing genome instability. Involved in the ubiquitination and degradation of the substrate adapter CDH1 of the anaphase-promoting complex (APC/C), thereby acting as an antagonist of APC/C in regulating G1 progression and S phase entry. May play a role in the G2 cell cycle checkpoint control after DNA damage, possibly by promoting the ubiquitination of MYBL2/BMYB. This chain is Cyclin-F (CCNF), found in Homo sapiens (Human).